A 262-amino-acid polypeptide reads, in one-letter code: Acyl-[acyl-carrier-protein]--UDP-N-acetylglucosamine O-acyltransferase (262 aa).

It belongs to the transferase hexapeptide repeat family. LpxA subfamily. In terms of assembly, homotrimer.

Its subcellular location is the cytoplasm. The catalysed reaction is a (3R)-hydroxyacyl-[ACP] + UDP-N-acetyl-alpha-D-glucosamine = a UDP-3-O-[(3R)-3-hydroxyacyl]-N-acetyl-alpha-D-glucosamine + holo-[ACP]. It functions in the pathway glycolipid biosynthesis; lipid IV(A) biosynthesis; lipid IV(A) from (3R)-3-hydroxytetradecanoyl-[acyl-carrier-protein] and UDP-N-acetyl-alpha-D-glucosamine: step 1/6. Involved in the biosynthesis of lipid A, a phosphorylated glycolipid that anchors the lipopolysaccharide to the outer membrane of the cell. The polypeptide is Acyl-[acyl-carrier-protein]--UDP-N-acetylglucosamine O-acyltransferase (Salmonella typhi).